A 377-amino-acid chain; its full sequence is Geranylgeranyl transferase type-1 subunit beta (377 aa).

4 PFTB repeats span residues 144-186, 193-234, 245-284, and 291-333; these read KEAC…YMLN, MKKA…CLMG, LNRIKRWCIMRQQNGYHGRPNKPVDTCYSFWVGATLKLLK, and FEKN…SLME. Geranylgeranyl diphosphate-binding positions include 219–221 and 263–266; these read HGG and RPNK. Zn(2+) contacts are provided by D269 and C271. 272-275 serves as a coordination point for geranylgeranyl diphosphate; it reads YSFW. H321 is a binding site for Zn(2+).

This sequence belongs to the protein prenyltransferase subunit beta family. In terms of assembly, heterodimer of FNTA and PGGT1B. PGGT1B mediates interaction with substrate peptides. The cofactor is Zn(2+). Requires Mg(2+) as cofactor.

The enzyme catalyses geranylgeranyl diphosphate + L-cysteinyl-[protein] = S-geranylgeranyl-L-cysteinyl-[protein] + diphosphate. Catalyzes the transfer of a geranylgeranyl moiety from geranylgeranyl diphosphate to a cysteine at the fourth position from the C-terminus of proteins with the C-terminal sequence Cys-aliphatic-aliphatic-X. Known substrates include RAC1, RAC2, RAP1A and RAP1B. In Rattus norvegicus (Rat), this protein is Geranylgeranyl transferase type-1 subunit beta (Pggt1b).